The primary structure comprises 544 residues: Chaperonin GroEL 1 (544 aa).

Residues 29–32 (TLGP), 86–90 (DGTTT), Gly413, 479–481 (NAA), and Asp495 each bind ATP.

It belongs to the chaperonin (HSP60) family. In terms of assembly, forms a cylinder of 14 subunits composed of two heptameric rings stacked back-to-back. Interacts with the co-chaperonin GroES.

The protein localises to the cytoplasm. The catalysed reaction is ATP + H2O + a folded polypeptide = ADP + phosphate + an unfolded polypeptide.. Together with its co-chaperonin GroES, plays an essential role in assisting protein folding. The GroEL-GroES system forms a nano-cage that allows encapsulation of the non-native substrate proteins and provides a physical environment optimized to promote and accelerate protein folding. The polypeptide is Chaperonin GroEL 1 (Synechococcus sp. (strain CC9902)).